The sequence spans 369 residues: Uroporphyrinogen decarboxylase (369 aa).

Residues 28 to 32 (RQAGR), Asp78, Tyr154, Ser209, and His339 contribute to the substrate site.

This sequence belongs to the uroporphyrinogen decarboxylase family. Homodimer.

Its subcellular location is the cytoplasm. The enzyme catalyses uroporphyrinogen III + 4 H(+) = coproporphyrinogen III + 4 CO2. It participates in porphyrin-containing compound metabolism; protoporphyrin-IX biosynthesis; coproporphyrinogen-III from 5-aminolevulinate: step 4/4. Catalyzes the decarboxylation of four acetate groups of uroporphyrinogen-III to yield coproporphyrinogen-III. The sequence is that of Uroporphyrinogen decarboxylase from Polaromonas naphthalenivorans (strain CJ2).